A 291-amino-acid polypeptide reads, in one-letter code: 4-hydroxy-tetrahydrodipicolinate synthase (291 aa).

Position 45 (Thr45) interacts with pyruvate. The active-site Proton donor/acceptor is Tyr133. Residue Lys161 is the Schiff-base intermediate with substrate of the active site. Ile203 provides a ligand contact to pyruvate.

It belongs to the DapA family. As to quaternary structure, homotetramer.

It is found in the cytoplasm. It carries out the reaction L-aspartate 4-semialdehyde + pyruvate = (2S,4S)-4-hydroxy-2,3,4,5-tetrahydrodipicolinate + H2O + H(+). It functions in the pathway amino-acid biosynthesis; L-lysine biosynthesis via DAP pathway; (S)-tetrahydrodipicolinate from L-aspartate: step 3/4. Its activity is regulated as follows. Is allosterically feedback inhibited by lysine; the N.meningitidis enzyme is significantly more sensitive to lysine than the E.coli enzyme. Shows substrate inhibition by (S)-ASA, with a Ki of 1.7 mM. In terms of biological role, catalyzes the condensation of (S)-aspartate-beta-semialdehyde [(S)-ASA] and pyruvate to 4-hydroxy-tetrahydrodipicolinate (HTPA). This is 4-hydroxy-tetrahydrodipicolinate synthase from Neisseria meningitidis serogroup B (strain ATCC BAA-335 / MC58).